The following is a 244-amino-acid chain: Leucyl/phenylalanyl-tRNA--protein transferase (244 aa).

Belongs to the L/F-transferase family.

The protein resides in the cytoplasm. The enzyme catalyses N-terminal L-lysyl-[protein] + L-leucyl-tRNA(Leu) = N-terminal L-leucyl-L-lysyl-[protein] + tRNA(Leu) + H(+). It catalyses the reaction N-terminal L-arginyl-[protein] + L-leucyl-tRNA(Leu) = N-terminal L-leucyl-L-arginyl-[protein] + tRNA(Leu) + H(+). It carries out the reaction L-phenylalanyl-tRNA(Phe) + an N-terminal L-alpha-aminoacyl-[protein] = an N-terminal L-phenylalanyl-L-alpha-aminoacyl-[protein] + tRNA(Phe). In terms of biological role, functions in the N-end rule pathway of protein degradation where it conjugates Leu, Phe and, less efficiently, Met from aminoacyl-tRNAs to the N-termini of proteins containing an N-terminal arginine or lysine. This is Leucyl/phenylalanyl-tRNA--protein transferase from Thermodesulfovibrio yellowstonii (strain ATCC 51303 / DSM 11347 / YP87).